The following is a 278-amino-acid chain: Thioredoxin-related transmembrane protein 1 (278 aa).

Positions 1–26 (MAHLGRLMVPLAALVLLLWAVPGAHG) are cleaved as a signal peptide. One can recognise a Thioredoxin domain in the interval 27-132 (RRNNVRVLTD…FINFVSDKEW (106 aa)). Residues 27–181 (RRNNVRVLTD…DLGIPAWGSY (155 aa)) lie on the Extracellular side of the membrane. Catalysis depends on nucleophile residues cysteine 56 and cysteine 59. An intrachain disulfide couples cysteine 56 to cysteine 59. A helical transmembrane segment spans residues 182–202 (LVFAFATVLSGLLLGLCMIFV). At 203-278 (ADCLCPSKRR…VGLPSATDTS (76 aa)) the chain is on the cytoplasmic side. S-palmitoyl cysteine attachment occurs at residues cysteine 205 and cysteine 207. Positions 217-226 (QYAKKTSPEF) are enriched in polar residues. The interval 217–278 (QYAKKTSPEF…VGLPSATDTS (62 aa)) is disordered. Positions 235–251 (EEQEADEEDVSEEEAED) are enriched in acidic residues. Phosphoserine is present on residues serine 245 and serine 278.

As to quaternary structure, interacts with ATP2A2. Post-translationally, palmitoylated; palmitoylation is required for localization to mitochondria-associated endoplasmic reticulum membrane (MAM).

It localises to the endoplasmic reticulum membrane. The protein localises to the mitochondrion membrane. The protein resides in the secreted. It catalyses the reaction Catalyzes the rearrangement of -S-S- bonds in proteins.. Its function is as follows. Thiredoxin domain-containing protein that participates in various redox reactions through the reversible oxidation of its active center dithiol to a disulfide and catalyze dithiol-disulfide exchange reactions. Acts as a key inhibitor of the alternative triglyceride biosynthesis pathway by inhibiting the activity of TMEM68/DIESL at the endoplasmic reticulum, thereby restricting accumulation of triacylglycerol. The alternative triglyceride biosynthesis pathway mediates formation of triacylglycerol from diacylglycerol and membrane phospholipids. Acts as a protein disulfide isomerase by catalyzing formation or reduction of disulfide bonds. Specifically mediates formation of disulfide bonds of transmembrane proteins at the endoplasmic reticulum membrane. Involved in ER-associated degradation (ERAD) via its protein disulfide isomerase activity by acting on folding-defective polypeptides at the endoplasmic reticulum membrane. Acts as a negative regulator of platelet aggregation following secretion in the extracellular space. Acts as a regulator of endoplasmic reticulum-mitochondria contact sites via its ability to regulate redox signals. Regulates endoplasmic reticulum-mitochondria Ca(2+) flux. This is Thioredoxin-related transmembrane protein 1 from Mus musculus (Mouse).